The following is a 310-amino-acid chain: tRNA-cytidine(32) 2-sulfurtransferase (310 aa).

Residues 45 to 50 carry the PP-loop motif motif; sequence SGGKDS. C120, C123, and C211 together coordinate [4Fe-4S] cluster.

This sequence belongs to the TtcA family. Homodimer. Mg(2+) is required as a cofactor. The cofactor is [4Fe-4S] cluster.

Its subcellular location is the cytoplasm. It carries out the reaction cytidine(32) in tRNA + S-sulfanyl-L-cysteinyl-[cysteine desulfurase] + AH2 + ATP = 2-thiocytidine(32) in tRNA + L-cysteinyl-[cysteine desulfurase] + A + AMP + diphosphate + H(+). It functions in the pathway tRNA modification. Catalyzes the ATP-dependent 2-thiolation of cytidine in position 32 of tRNA, to form 2-thiocytidine (s(2)C32). The sulfur atoms are provided by the cysteine/cysteine desulfurase (IscS) system. This Shewanella baltica (strain OS185) protein is tRNA-cytidine(32) 2-sulfurtransferase.